The sequence spans 1115 residues: Calcium-transporting ATPase PAT1 (1115 aa).

The Stromal portion of the chain corresponds to 1 to 99 (MTGSHEMESI…SIVLDALSDH (99 aa)). The helical transmembrane segment at 100–120 (ILILLIVAAVVSIVLGSIDYT) threads the bilayer. At 121-126 (SDHPET) the chain is on the lumenal side. The helical transmembrane segment at 127 to 147 (GWIDGVAILVAVILVVGITSL) threads the bilayer. Residues 148–235 (NDFKNQARFR…KGQPQDNMDP (88 aa)) are Stromal-facing. Residues 236–256 (FLISGSMVIEGFGTMLVTAVG) form a helical membrane-spanning segment. The Lumenal segment spans residues 257 to 287 (VNSFNGKTMMGLRVASEDTPLQMKLSVLASR). A helical membrane pass occupies residues 288–308 (IGYFGMGAAILMLLIAIPKYF). At 309–328 (IQRKVHDIEITREDAQPIVQ) the chain is on the stromal side. The helical transmembrane segment at 329-349 (LVISAITIVVVAVPEGLPLAV) threads the bilayer. Topologically, residues 350–735 (TMALAYGMMK…GRNIYDAICK (386 aa)) are lumenal. D385 acts as the 4-aspartylphosphate intermediate in catalysis. Mg(2+) contacts are provided by D678 and D682. Residues 736-756 (FLQFQLTVNVVAVTVAFIGTL) form a helical membrane-spanning segment. Over 757-832 (TSDVVEDKDN…GKNAPLITRS (76 aa)) the chain is Stromal. Residues 762–784 (EDKDNSSSSGSADKVTEEEPRQG) form a disordered region. Residues 833–853 (MWKNIIGQAALQLAILFTILY) form a helical membrane-spanning segment. Residues 854 to 873 (QGHNIFQHFVPQAHGPIIKN) are Lumenal-facing. The chain crosses the membrane as a helical span at residues 874–894 (GLHHYTLVFNCFVFLQLFNEI). The Stromal portion of the chain corresponds to 895–913 (NARVLGSRTNPFKNFFNNP). Residues 914 to 934 (IFIAVMIFTLGVQIIFVTFGG) form a helical membrane-spanning segment. Residues 935 to 943 (SATSTDSLY) are Lumenal-facing. Residues 944–964 (IVEWICCVVVGAISLPVGLLL) traverse the membrane as a helical segment. Residues 965-1115 (RKIPIREPVV…LHLPVNQINN (151 aa)) lie on the Stromal side of the membrane. A disordered region spans residues 984-1056 (AVYTSPSPNP…IPSSSSNLVN (73 aa)). Positions 1040 to 1053 (NDNINTPIPSSSSN) are enriched in low complexity.

The protein belongs to the cation transport ATPase (P-type) (TC 3.A.3) family. Type IIB subfamily.

The protein localises to the contractile vacuole membrane. Its subcellular location is the cell membrane. The enzyme catalyses Ca(2+)(in) + ATP + H2O = Ca(2+)(out) + ADP + phosphate + H(+). Functionally, calcium ATPase involved in Ca(2+) homeostasis as a component of the contractile vacuole complex. This Dictyostelium discoideum (Social amoeba) protein is Calcium-transporting ATPase PAT1 (patA).